An 857-amino-acid chain; its full sequence is Potassium channel AKT1 (857 aa).

Topologically, residues 1 to 61 (MRGGALLCGQ…PYDHKYRIWE (61 aa)) are cytoplasmic. Residues 62–82 (AFLVVLVVYTAWVSPFEFGFL) traverse the membrane as a helical segment. The Extracellular portion of the chain corresponds to 83–90 (RKPRPPLS). Residues 91-111 (ITDNIVNAFFAIDIIMTFFVG) form a helical membrane-spanning segment. At 112-134 (YLDKSTYLIVDDRKQIAFKYLRS) the chain is on the cytoplasmic side. The helical transmembrane segment at 135-155 (WFLLDLVSTIPSEAAMRISSQ) threads the bilayer. Topologically, residues 156–158 (SYG) are extracellular. A helical; Voltage-sensor transmembrane segment spans residues 159 to 179 (LFNMLRLWRLRRVGALFARLE). The Cytoplasmic portion of the chain corresponds to 180–193 (KDRNFNYFWVRCAK). A helical transmembrane segment spans residues 194 to 214 (LVCVTLFAVHCAACFYYLIAA). The Extracellular segment spans residues 215–241 (RNSNPAKTWIGANVANFLEESLWMRYV). An intramembrane region (pore-forming) is located at residues 242 to 261 (TSMYWSITTLTTVGYGDLHP). At 262–265 (VNTK) the chain is on the extracellular side. A helical transmembrane segment spans residues 266 to 286 (EMIFDIFYMLFNLGLTAYLIG). At 287 to 857 (NMTNLVVHGT…GDHLIFATDS (571 aa)) the chain is on the cytoplasmic side. 372 to 493 (LFRGVSNDLL…IMNNLLQHLK (122 aa)) is a binding site for a nucleoside 3',5'-cyclic phosphate. ANK repeat units lie at residues 515 to 546 (KMDL…DPNE), 550 to 579 (NGRT…DPNC), 583 to 612 (EGSV…TIDA), 614 to 643 (DVGH…DVTR), 647 to 676 (TGTS…DVNK), and 680 to 709 (HGWT…ERRV). One can recognise a KHA domain in the interval 790–857 (RVTISCAEKD…GDHLIFATDS (68 aa)).

Belongs to the potassium channel family. Plant (TC 1.A.1.4) subfamily. In terms of assembly, the potassium channel is probably composed of a homo- or heterotetrameric complex of pore-forming subunits. Possible heteromultimer with AKT2 or KAT3. Part of a K(+)-channel calcium-sensing kinase/phosphatase complex composed by a calcium sensor CBL (CBL1, CBL2, CBL3 or CBL9), a kinase CIPK (CIPK6, CIPK16 or CIPK23), a phosphatase PP2C (AIP1) and a K(+)-channel (AKT1). Interacts directly with AIP1, CBL10, CIPK6, CIPK16 and CIPK23. Post-translationally, phosphorylated by CIPK proteins CIPK6, CIPK16 and CIPK23. The activation by phosphorylation is induced by low K(+) conditions and stimulates K(+) uptake and relocation. Dephosphorylation by AIP1 repressed the transport activity. In terms of tissue distribution, preferentially expressed in the peripheral cell layers of root mature including root cortex and root hairs. Detected also, at a lower level, in the mesophyll of the leaves and at restricted sites corresponding to hydathodes and guard cells.

It is found in the cell membrane. Functionally, highly selective inward-rectifying potassium channel that mediate potassium uptake by plant roots in response to low K(+) conditions, by a calcium-, CBL-, and CIPK-dependent pathway. Positively regulated by phosphorylation by CIPK23. Negatively regulated by a kinase-independent regulatory mechanism involving a competing direct binding of CBL10. Involved in the stomatal regulation by monitoring the turgor pressure in guard cells. Assuming opened or closed conformations in response to the voltage difference across the membrane, the channel is activated by hyperpolarization. May interact with the cytoskeleton or with regulatory proteins. Is essential with POT5/HAK5 for high-affinity potassium uptake in roots during seedling establishment and postgermination growth under low potassium conditions. The polypeptide is Potassium channel AKT1 (AKT1) (Arabidopsis thaliana (Mouse-ear cress)).